Consider the following 93-residue polypeptide: HssA/B-like protein 26 (93 aa).

The protein belongs to the hssA/B family.

In Dictyostelium discoideum (Social amoeba), this protein is HssA/B-like protein 26 (hssl26).